The following is a 273-amino-acid chain: Release factor glutamine methyltransferase (273 aa).

Residues 109 to 113 (GTGSG), aspartate 132, tryptophan 159, and asparagine 176 contribute to the S-adenosyl-L-methionine site. 176 to 179 (NPPY) serves as a coordination point for substrate.

Belongs to the protein N5-glutamine methyltransferase family. PrmC subfamily.

The enzyme catalyses L-glutaminyl-[peptide chain release factor] + S-adenosyl-L-methionine = N(5)-methyl-L-glutaminyl-[peptide chain release factor] + S-adenosyl-L-homocysteine + H(+). Its function is as follows. Methylates the class 1 translation termination release factors RF1/PrfA and RF2/PrfB on the glutamine residue of the universally conserved GGQ motif. The sequence is that of Release factor glutamine methyltransferase from Neisseria gonorrhoeae (strain ATCC 700825 / FA 1090).